The following is a 330-amino-acid chain: Phosphate acyltransferase (330 aa).

It belongs to the PlsX family. Homodimer. Probably interacts with PlsY.

It is found in the cytoplasm. It catalyses the reaction a fatty acyl-[ACP] + phosphate = an acyl phosphate + holo-[ACP]. Its pathway is lipid metabolism; phospholipid metabolism. In terms of biological role, catalyzes the reversible formation of acyl-phosphate (acyl-PO(4)) from acyl-[acyl-carrier-protein] (acyl-ACP). This enzyme utilizes acyl-ACP as fatty acyl donor, but not acyl-CoA. The sequence is that of Phosphate acyltransferase from Streptococcus pneumoniae serotype 2 (strain D39 / NCTC 7466).